Here is a 177-residue protein sequence, read N- to C-terminus: MSRIGKKPVPVPAGVTANVDGQKVTAKGPKGELFFVANDDIQLKLEDNGVSVTPANGTKEARSKWGMSRTMIENIFKGVKDGYERKLEINGVGYRAALQGKNLQLALGFSHDVVYEPPVGITIAVPKPTEIIVSGINKQQVGQVAAEIREYRGPEPYKGKGVKYAEERIVRKEGKKK.

Belongs to the universal ribosomal protein uL6 family. As to quaternary structure, part of the 50S ribosomal subunit.

Its function is as follows. This protein binds to the 23S rRNA, and is important in its secondary structure. It is located near the subunit interface in the base of the L7/L12 stalk, and near the tRNA binding site of the peptidyltransferase center. The polypeptide is Large ribosomal subunit protein uL6 (Agrobacterium fabrum (strain C58 / ATCC 33970) (Agrobacterium tumefaciens (strain C58))).